The following is a 229-amino-acid chain: Large ribosomal subunit protein uL1 (229 aa).

It belongs to the universal ribosomal protein uL1 family. In terms of assembly, part of the 50S ribosomal subunit.

In terms of biological role, binds directly to 23S rRNA. The L1 stalk is quite mobile in the ribosome, and is involved in E site tRNA release. Functionally, protein L1 is also a translational repressor protein, it controls the translation of the L11 operon by binding to its mRNA. In Rhodopseudomonas palustris (strain HaA2), this protein is Large ribosomal subunit protein uL1.